The chain runs to 442 residues: Transcriptional coactivator YAP1 (442 aa).

Residues Ser21, Ser69, and Ser87 each carry the phosphoserine; by LATS1 and LATS2 modification. 2 disordered regions span residues 51 to 89 (LPDS…HSSP) and 97 to 116 (VSPG…QHLR). Position 119 is a phosphoserine; by LATS1 and LATS2 (Ser119). 2 WW domains span residues 126-159 (MPLP…DPRK) and 186-219 (GPLP…DPRL). The interval 230 to 254 (ISQSAPVKQGSQLPSSPQSGVMSGN) is disordered. A compositionally biased stretch (low complexity) spans 238–249 (QGSQLPSSPQSG). The interval 247–442 (QSGVMSGNNP…IDKENFLTWL (196 aa)) is transactivation domain. Positions 258 to 279 (RLQQIHIEKERLRIKQELLRQR) form a coiled coil. The segment at 286-374 (RNQLPTSMEQ…DTLGPGSMAT (89 aa)) is disordered. Composition is skewed to polar residues over residues 288-304 (QLPT…NPVS), 313-329 (RNMT…SGTY), and 337-347 (DSGLSMSSYSV).

The protein belongs to the YAP1 family. Post-translationally, phosphorylated by lats1 and lats2; leading to cytoplasmic translocation and inactivation. As to expression, expressed in the notochord, brain, eyes, branchial arches and pectoral fins.

It is found in the cytoplasm. The protein resides in the nucleus. Its subcellular location is the cell junction. It localises to the tight junction. The protein localises to the cell membrane. Functionally, transcriptional regulator which can act both as a coactivator and a corepressor and is the critical downstream regulatory target in the Hippo signaling pathway that plays a pivotal role in organ size control and tumor suppression by restricting proliferation and promoting apoptosis. Required for expansion of the neural plate and neural plate border zone progenitor pools. Acts as a direct regulator of pax3 expression via interaction with tead1. Plays a key role in tissue tension and 3D tissue shape by regulating cortical actomyosin network formation. This chain is Transcriptional coactivator YAP1 (yap1), found in Danio rerio (Zebrafish).